A 601-amino-acid polypeptide reads, in one-letter code: Putative Lon protease homolog (601 aa).

Positions 363–560 (GEIVGQINGL…YQACELLFGR (198 aa)) constitute a Lon proteolytic domain. Active-site residues include S455 and K498.

It belongs to the peptidase S16 family.

The protein is Putative Lon protease homolog of Haemophilus influenzae (strain ATCC 51907 / DSM 11121 / KW20 / Rd).